We begin with the raw amino-acid sequence, 256 residues long: Trans-aconitate 2-methyltransferase (256 aa).

It belongs to the methyltransferase superfamily. Tam family.

It localises to the cytoplasm. It catalyses the reaction trans-aconitate + S-adenosyl-L-methionine = (E)-3-(methoxycarbonyl)pent-2-enedioate + S-adenosyl-L-homocysteine. Catalyzes the S-adenosylmethionine monomethyl esterification of trans-aconitate. In Rhodopseudomonas palustris (strain BisB18), this protein is Trans-aconitate 2-methyltransferase.